We begin with the raw amino-acid sequence, 508 residues long: Pentatricopeptide repeat-containing protein At5g48730, chloroplastic (508 aa).

Residues Met1–His10 are compositionally biased toward polar residues. Positions Met1–Glu22 are disordered. The N-terminal 28 residues, Met1–Arg28, are a transit peptide targeting the chloroplast. 10 PPR repeats span residues Asn149–Val183, Asn184–Ser214, Asp220–Pro254, Asn255–Pro290, Asp291–Pro325, Asn326–Trp360, Thr361–Pro395, Ser396–Leu430, Asp431–Pro465, and Asp466–Gln500.

Belongs to the PPR family. P subfamily.

Its subcellular location is the plastid. The protein localises to the chloroplast. This Arabidopsis thaliana (Mouse-ear cress) protein is Pentatricopeptide repeat-containing protein At5g48730, chloroplastic.